A 453-amino-acid chain; its full sequence is tRNA modification GTPase MnmE (453 aa).

(6S)-5-formyl-5,6,7,8-tetrahydrofolate-binding residues include Arg-22, Glu-79, and Lys-119. The 162-residue stretch at 215 to 376 folds into the TrmE-type G domain; it reads GMKVVIAGRP…LREHLKACMG (162 aa). Asn-225 is a binding site for K(+). GTP-binding positions include 225 to 230, 244 to 250, 269 to 272, and 334 to 337; these read NAGKSS, TEIAGTT, DTAG, and NKAD. Mg(2+) is bound at residue Ser-229. K(+)-binding residues include Thr-244, Ile-246, and Thr-249. Mg(2+) is bound at residue Thr-250. Lys-453 lines the (6S)-5-formyl-5,6,7,8-tetrahydrofolate pocket.

Belongs to the TRAFAC class TrmE-Era-EngA-EngB-Septin-like GTPase superfamily. TrmE GTPase family. Homodimer. Heterotetramer of two MnmE and two MnmG subunits. K(+) is required as a cofactor.

The protein resides in the cytoplasm. Exhibits a very high intrinsic GTPase hydrolysis rate. Involved in the addition of a carboxymethylaminomethyl (cmnm) group at the wobble position (U34) of certain tRNAs, forming tRNA-cmnm(5)s(2)U34. The protein is tRNA modification GTPase MnmE of Aeromonas salmonicida (strain A449).